The primary structure comprises 431 residues: Putative serine/threonine-protein kinase B (431 aa).

The 260-residue stretch at 20 to 279 (YLNKGIVGLG…VRENFQIPYI (260 aa)) folds into the Protein kinase domain. Residues 26 to 34 (VGLGSYGEG) and lysine 49 each bind ATP. Aspartate 147 serves as the catalytic Proton acceptor. Residues 331–429 (DVTHRGHVNK…WVHAIQRGIG (99 aa)) enclose the PH domain.

Belongs to the protein kinase superfamily. Ser/Thr protein kinase family.

It catalyses the reaction L-seryl-[protein] + ATP = O-phospho-L-seryl-[protein] + ADP + H(+). It carries out the reaction L-threonyl-[protein] + ATP = O-phospho-L-threonyl-[protein] + ADP + H(+). The sequence is that of Putative serine/threonine-protein kinase B (NRKB) from Trypanosoma brucei brucei.